The following is a 475-amino-acid chain: uncharacterized protein (475 aa).

Residues 185–244 (EISVSAISEQLASLMERVDKLEKMNAALEEENKQLKKEREATIKSVKKEAKKIKQEKPQI) adopt a coiled-coil conformation.

This is an uncharacterized protein from Nora virus.